The primary structure comprises 1131 residues: DNA polymerase II large subunit (1131 aa).

The protein belongs to the archaeal DNA polymerase II family. As to quaternary structure, heterodimer of a large subunit and a small subunit.

The enzyme catalyses DNA(n) + a 2'-deoxyribonucleoside 5'-triphosphate = DNA(n+1) + diphosphate. It catalyses the reaction Exonucleolytic cleavage in the 3'- to 5'-direction to yield nucleoside 5'-phosphates.. Functionally, possesses two activities: a DNA synthesis (polymerase) and an exonucleolytic activity that degrades single-stranded DNA in the 3'- to 5'-direction. Has a template-primer preference which is characteristic of a replicative DNA polymerase. The sequence is that of DNA polymerase II large subunit from Methanococcus maripaludis (strain DSM 14266 / JCM 13030 / NBRC 101832 / S2 / LL).